Consider the following 378-residue polypeptide: Probable pectin lyase A (378 aa).

A signal peptide spans 1 to 19 (MKFPAFITAIISIASLSSA). Cystine bridges form between cysteine 82–cysteine 101 and cysteine 91–cysteine 225. Residue arginine 255 is part of the active site. Cysteines 321 and 329 form a disulfide.

This sequence belongs to the polysaccharide lyase 1 family.

It is found in the secreted. It catalyses the reaction Eliminative cleavage of (1-&gt;4)-alpha-D-galacturonan methyl ester to give oligosaccharides with 4-deoxy-6-O-methyl-alpha-D-galact-4-enuronosyl groups at their non-reducing ends.. In terms of biological role, pectinolytic enzymes consist of four classes of enzymes: pectin lyase, polygalacturonase, pectin methylesterase and rhamnogalacturonase. Among pectinolytic enzymes, pectin lyase is the most important in depolymerization of pectin, since it cleaves internal glycosidic bonds of highly methylated pectins. The chain is Probable pectin lyase A (pelA) from Aspergillus terreus (strain NIH 2624 / FGSC A1156).